The following is a 336-amino-acid chain: Calcium uniporter protein 3, mitochondrial (336 aa).

A mitochondrion-targeting transit peptide spans 1 to 69; the sequence is MAMRKLLSKK…RFMHNSAMIR (69 aa). 2 helical membrane-spanning segments follow: residues 231–251 and 257–277; these read LWAG…LTFW and VMEP…YAFF. Positions 255–263 match the Selectivity filter motif; sequence WDVMEPICF. Residue glutamate 259 participates in Ca(2+) binding.

It belongs to the MCU (TC 1.A.77) family.

The protein resides in the mitochondrion inner membrane. The catalysed reaction is Ca(2+)(in) = Ca(2+)(out). In terms of biological role, mitochondrial inner membrane calcium uniporter that mediates calcium uptake into mitochondria. Constitutes a pore-forming and calcium-conducting subunit. Mitochondrial calcium homeostasis plays key roles in cellular physiology and regulates cell bioenergetics, cytoplasmic calcium signals and activation of cell death pathways. The sequence is that of Calcium uniporter protein 3, mitochondrial from Arabidopsis thaliana (Mouse-ear cress).